The chain runs to 188 residues: dTTP/UTP pyrophosphatase (188 aa).

Asp-70 functions as the Proton acceptor in the catalytic mechanism.

The protein belongs to the Maf family. YhdE subfamily. A divalent metal cation is required as a cofactor.

Its subcellular location is the cytoplasm. It catalyses the reaction dTTP + H2O = dTMP + diphosphate + H(+). The catalysed reaction is UTP + H2O = UMP + diphosphate + H(+). Its function is as follows. Nucleoside triphosphate pyrophosphatase that hydrolyzes dTTP and UTP. May have a dual role in cell division arrest and in preventing the incorporation of modified nucleotides into cellular nucleic acids. In Clostridium beijerinckii (strain ATCC 51743 / NCIMB 8052) (Clostridium acetobutylicum), this protein is dTTP/UTP pyrophosphatase.